The primary structure comprises 109 residues: uncharacterized protein (109 aa).

A disordered region spans residues Met1 to Val26.

This is an uncharacterized protein from Mycobacterium bovis (strain ATCC BAA-935 / AF2122/97).